The chain runs to 901 residues: Protein translocase subunit SecA (901 aa).

Residues Gln87, 105–109 (GEGKT), and Asp512 each bind ATP. 4 residues coordinate Zn(2+): Cys885, Cys887, Cys896, and His897.

Belongs to the SecA family. In terms of assembly, monomer and homodimer. Part of the essential Sec protein translocation apparatus which comprises SecA, SecYEG and auxiliary proteins SecDF-YajC and YidC. Zn(2+) serves as cofactor.

The protein resides in the cell inner membrane. Its subcellular location is the cytoplasm. The enzyme catalyses ATP + H2O + cellular proteinSide 1 = ADP + phosphate + cellular proteinSide 2.. Part of the Sec protein translocase complex. Interacts with the SecYEG preprotein conducting channel. Has a central role in coupling the hydrolysis of ATP to the transfer of proteins into and across the cell membrane, serving both as a receptor for the preprotein-SecB complex and as an ATP-driven molecular motor driving the stepwise translocation of polypeptide chains across the membrane. The polypeptide is Protein translocase subunit SecA (Salmonella agona (strain SL483)).